Reading from the N-terminus, the 185-residue chain is Elongation factor P (185 aa).

This sequence belongs to the elongation factor P family.

It localises to the cytoplasm. It functions in the pathway protein biosynthesis; polypeptide chain elongation. Functionally, involved in peptide bond synthesis. Stimulates efficient translation and peptide-bond synthesis on native or reconstituted 70S ribosomes in vitro. Probably functions indirectly by altering the affinity of the ribosome for aminoacyl-tRNA, thus increasing their reactivity as acceptors for peptidyl transferase. This Burkholderia ambifaria (strain MC40-6) protein is Elongation factor P.